A 177-amino-acid chain; its full sequence is ATP-dependent protease subunit HslV (177 aa).

Threonine 7 is an active-site residue. Na(+) contacts are provided by glycine 162, cysteine 165, and threonine 168.

This sequence belongs to the peptidase T1B family. HslV subfamily. As to quaternary structure, a double ring-shaped homohexamer of HslV is capped on each side by a ring-shaped HslU homohexamer. The assembly of the HslU/HslV complex is dependent on binding of ATP.

It is found in the cytoplasm. It catalyses the reaction ATP-dependent cleavage of peptide bonds with broad specificity.. Allosterically activated by HslU binding. Functionally, protease subunit of a proteasome-like degradation complex believed to be a general protein degrading machinery. This Persephonella marina (strain DSM 14350 / EX-H1) protein is ATP-dependent protease subunit HslV.